The chain runs to 69 residues: Cytochrome c oxidase subunit 8A, mitochondrial (69 aa).

The transit peptide at 1-25 (MSVLTSLLLRGLTGSARRLPVPRAK) directs the protein to the mitochondrion. The Mitochondrial matrix portion of the chain corresponds to 26-36 (VHSMPPEEELG). A helical membrane pass occupies residues 37–60 (IMEKAIGLTFCFVSLFLPAGWILS). Residues 61–69 (HLEDYKRPE) lie on the Mitochondrial intermembrane side of the membrane.

It belongs to the cytochrome c oxidase VIII family. In terms of assembly, component of the cytochrome c oxidase (complex IV, CIV), a multisubunit enzyme composed of 14 subunits. The complex is composed of a catalytic core of 3 subunits MT-CO1, MT-CO2 and MT-CO3, encoded in the mitochondrial DNA, and 11 supernumerary subunits COX4I, COX5A, COX5B, COX6A, COX6B, COX6C, COX7A, COX7B, COX7C, COX8 and NDUFA4, which are encoded in the nuclear genome. The complex exists as a monomer or a dimer and forms supercomplexes (SCs) in the inner mitochondrial membrane with NADH-ubiquinone oxidoreductase (complex I, CI) and ubiquinol-cytochrome c oxidoreductase (cytochrome b-c1 complex, complex III, CIII), resulting in different assemblies (supercomplex SCI(1)III(2)IV(1) and megacomplex MCI(2)III(2)IV(2)). Post-translationally, in response to mitochondrial stress, the precursor protein is ubiquitinated by the SIFI complex in the cytoplasm before mitochondrial import, leading to its degradation. Within the SIFI complex, UBR4 initiates ubiquitin chain that are further elongated or branched by KCMF1.

The protein resides in the mitochondrion inner membrane. The protein operates within energy metabolism; oxidative phosphorylation. Functionally, component of the cytochrome c oxidase, the last enzyme in the mitochondrial electron transport chain which drives oxidative phosphorylation. The respiratory chain contains 3 multisubunit complexes succinate dehydrogenase (complex II, CII), ubiquinol-cytochrome c oxidoreductase (cytochrome b-c1 complex, complex III, CIII) and cytochrome c oxidase (complex IV, CIV), that cooperate to transfer electrons derived from NADH and succinate to molecular oxygen, creating an electrochemical gradient over the inner membrane that drives transmembrane transport and the ATP synthase. Cytochrome c oxidase is the component of the respiratory chain that catalyzes the reduction of oxygen to water. Electrons originating from reduced cytochrome c in the intermembrane space (IMS) are transferred via the dinuclear copper A center (CU(A)) of subunit 2 and heme A of subunit 1 to the active site in subunit 1, a binuclear center (BNC) formed by heme A3 and copper B (CU(B)). The BNC reduces molecular oxygen to 2 water molecules using 4 electrons from cytochrome c in the IMS and 4 protons from the mitochondrial matrix. In Macaca fascicularis (Crab-eating macaque), this protein is Cytochrome c oxidase subunit 8A, mitochondrial (COX8A).